Consider the following 228-residue polypeptide: Ribonuclease 3 (228 aa).

The RNase III domain occupies isoleucine 3–glycine 132. Residue glutamate 45 participates in Mg(2+) binding. The active site involves aspartate 49. Mg(2+)-binding residues include aspartate 118 and glutamate 121. Glutamate 121 is a catalytic residue. One can recognise a DRBM domain in the interval aspartate 158–asparagine 227. Residues glycine 205–serine 228 form a disordered region.

Belongs to the ribonuclease III family. In terms of assembly, homodimer. Mg(2+) serves as cofactor.

Its subcellular location is the cytoplasm. It carries out the reaction Endonucleolytic cleavage to 5'-phosphomonoester.. Functionally, digests double-stranded RNA. Involved in the processing of primary rRNA transcript to yield the immediate precursors to the large and small rRNAs (23S and 16S). Processes some mRNAs, and tRNAs when they are encoded in the rRNA operon. Processes pre-crRNA and tracrRNA of type II CRISPR loci if present in the organism. In Oceanobacillus iheyensis (strain DSM 14371 / CIP 107618 / JCM 11309 / KCTC 3954 / HTE831), this protein is Ribonuclease 3.